Consider the following 307-residue polypeptide: Small ribosomal subunit biogenesis GTPase RsgA (307 aa).

Positions 1 to 20 (MPSEHPFSDGISTPNPKETM) are disordered. Residues 10-20 (GISTPNPKETM) show a composition bias toward polar residues. The CP-type G domain occupies 85–242 (RQDAWKTKLI…LIDSPGLQEF (158 aa)). Residues 135–138 (NKAD) and 184–192 (GQSGMGKST) contribute to the GTP site. Positions 266, 271, 273, and 279 each coordinate Zn(2+).

Belongs to the TRAFAC class YlqF/YawG GTPase family. RsgA subfamily. In terms of assembly, monomer. Associates with 30S ribosomal subunit, binds 16S rRNA. It depends on Zn(2+) as a cofactor.

It localises to the cytoplasm. In terms of biological role, one of several proteins that assist in the late maturation steps of the functional core of the 30S ribosomal subunit. Helps release RbfA from mature subunits. May play a role in the assembly of ribosomal proteins into the subunit. Circularly permuted GTPase that catalyzes slow GTP hydrolysis, GTPase activity is stimulated by the 30S ribosomal subunit. The sequence is that of Small ribosomal subunit biogenesis GTPase RsgA from Neisseria meningitidis serogroup C / serotype 2a (strain ATCC 700532 / DSM 15464 / FAM18).